The primary structure comprises 296 residues: Ribosomal RNA small subunit methyltransferase H (296 aa).

S-adenosyl-L-methionine contacts are provided by residues 38–40 (GVH), E57, F88, D103, and H110.

This sequence belongs to the methyltransferase superfamily. RsmH family.

The protein localises to the cytoplasm. It carries out the reaction cytidine(1402) in 16S rRNA + S-adenosyl-L-methionine = N(4)-methylcytidine(1402) in 16S rRNA + S-adenosyl-L-homocysteine + H(+). Functionally, specifically methylates the N4 position of cytidine in position 1402 (C1402) of 16S rRNA. This chain is Ribosomal RNA small subunit methyltransferase H, found in Borreliella burgdorferi (strain ZS7) (Borrelia burgdorferi).